The primary structure comprises 186 residues: LSM12 homolog B (186 aa).

In terms of domain architecture, Sm spans 1–74 (MSSLAPCFTV…CMDIEIVKEA (74 aa)). In terms of domain architecture, AD spans 84 to 186 (EPIDLPMIRE…VVQNFCSKQF (103 aa)).

This sequence belongs to the LSM12 family. In terms of assembly, interacts with Sbat; along with Sbat and Vlet, may form an accessory subcomplex involved in SMN complex function.

Functionally, may have an accessory function in the survival motor neuron (SMN) complex. This is LSM12 homolog B from Drosophila melanogaster (Fruit fly).